The primary structure comprises 292 residues: Homoserine kinase (292 aa).

84-94 (PLARGMGSSSA) lines the ATP pocket.

The protein belongs to the GHMP kinase family. Homoserine kinase subfamily.

The protein localises to the cytoplasm. It catalyses the reaction L-homoserine + ATP = O-phospho-L-homoserine + ADP + H(+). It functions in the pathway amino-acid biosynthesis; L-threonine biosynthesis; L-threonine from L-aspartate: step 4/5. In terms of biological role, catalyzes the ATP-dependent phosphorylation of L-homoserine to L-homoserine phosphate. This chain is Homoserine kinase, found in Thermus thermophilus (strain ATCC BAA-163 / DSM 7039 / HB27).